The following is a 66-amino-acid chain: DNA-directed RNA polymerase subunit Rpo10 (66 aa).

Zn(2+)-binding residues include Cys7, Cys10, Cys44, and Cys45.

It belongs to the archaeal Rpo10/eukaryotic RPB10 RNA polymerase subunit family. In terms of assembly, part of the RNA polymerase complex. It depends on Zn(2+) as a cofactor.

The protein localises to the cytoplasm. The catalysed reaction is RNA(n) + a ribonucleoside 5'-triphosphate = RNA(n+1) + diphosphate. Its function is as follows. DNA-dependent RNA polymerase (RNAP) catalyzes the transcription of DNA into RNA using the four ribonucleoside triphosphates as substrates. This chain is DNA-directed RNA polymerase subunit Rpo10, found in Saccharolobus islandicus (strain Y.N.15.51 / Yellowstone #2) (Sulfolobus islandicus).